A 285-amino-acid polypeptide reads, in one-letter code: HTH-type transcriptional regulator HexR (285 aa).

The HTH rpiR-type domain occupies 2 to 78 (KNLLEQIQSR…IQLAQSLASG (77 aa)). Residues 38–57 (IAALAQAAAVSEPTVNRFCR) constitute a DNA-binding region (H-T-H motif). An SIS domain is found at 122–261 (AVDLLIQARQ…ATGVTLRRGV (140 aa)).

Its function is as follows. Involved in regulation of glucose metabolism. Transcriptional repressor of the gap-1 gene and of the edd-glk-gltR-2 and zwf-pgl-eda operons. Acts by binding directly to an inverted pseudopalindromic sequence in the promoter region. This chain is HTH-type transcriptional regulator HexR, found in Pseudomonas aeruginosa (strain ATCC 15692 / DSM 22644 / CIP 104116 / JCM 14847 / LMG 12228 / 1C / PRS 101 / PAO1).